The primary structure comprises 262 residues: Ribose-5-phosphate isomerase A (262 aa).

Substrate is bound by residues 33 to 36 (TGST), 89 to 92 (DGAD), and 102 to 105 (KGGG). Glu111 functions as the Proton acceptor in the catalytic mechanism. Lys129 is a binding site for substrate.

It belongs to the ribose 5-phosphate isomerase family. Homodimer.

The catalysed reaction is aldehydo-D-ribose 5-phosphate = D-ribulose 5-phosphate. It participates in carbohydrate degradation; pentose phosphate pathway; D-ribose 5-phosphate from D-ribulose 5-phosphate (non-oxidative stage): step 1/1. Its function is as follows. Catalyzes the reversible conversion of ribose-5-phosphate to ribulose 5-phosphate. This is Ribose-5-phosphate isomerase A from Cereibacter sphaeroides (strain ATCC 17023 / DSM 158 / JCM 6121 / CCUG 31486 / LMG 2827 / NBRC 12203 / NCIMB 8253 / ATH 2.4.1.) (Rhodobacter sphaeroides).